A 217-amino-acid polypeptide reads, in one-letter code: MNQSLLSPFGTAIERVETALISLKQGRGVLVVDDEDRENEGDLIYSAETLTNEQMALLIREGSGIVCLCLPDERVKHLALPPMVENNSSQYGTAFTVSIEAKEGVTTGVSAADRVTTIKTAIADDAQPDDLARPGHVYPLRAQPGGVMTRRGHTEGTIDLMILAGLKPAGVLCEITNPDGTMARLAEIISFGAKHDLPVLTIEDIVEYRKSLMAEAS.

D-ribulose 5-phosphate contacts are provided by residues 37–38 (RE), D42, 150–154 (RRGHT), and E174. E38 provides a ligand contact to Mg(2+). Residue H153 participates in Mg(2+) binding.

Belongs to the DHBP synthase family. In terms of assembly, homodimer. Mg(2+) serves as cofactor. It depends on Mn(2+) as a cofactor.

The enzyme catalyses D-ribulose 5-phosphate = (2S)-2-hydroxy-3-oxobutyl phosphate + formate + H(+). It participates in cofactor biosynthesis; riboflavin biosynthesis; 2-hydroxy-3-oxobutyl phosphate from D-ribulose 5-phosphate: step 1/1. Catalyzes the conversion of D-ribulose 5-phosphate to formate and 3,4-dihydroxy-2-butanone 4-phosphate. The sequence is that of 3,4-dihydroxy-2-butanone 4-phosphate synthase from Shewanella sediminis (strain HAW-EB3).